A 141-amino-acid polypeptide reads, in one-letter code: uncharacterized protein (141 aa).

The chain crosses the membrane as a helical span at residues 13-35 (PVIGVILMVAITVILAAVIASFV).

It is found in the membrane. This is an uncharacterized protein from Archaeoglobus fulgidus (strain ATCC 49558 / DSM 4304 / JCM 9628 / NBRC 100126 / VC-16).